The primary structure comprises 93 residues: Acylphosphatase (93 aa).

One can recognise an Acylphosphatase-like domain in the interval 3–93 (KQQYFISGKV…FQFNNFKIYY (91 aa)). Catalysis depends on residues R18 and N36.

Belongs to the acylphosphatase family.

The enzyme catalyses an acyl phosphate + H2O = a carboxylate + phosphate + H(+). This Borrelia garinii subsp. bavariensis (strain ATCC BAA-2496 / DSM 23469 / PBi) (Borreliella bavariensis) protein is Acylphosphatase (acyP).